Reading from the N-terminus, the 402-residue chain is Tol-Pal system protein TolB (402 aa).

Positions 1–17 (MKKIVAIFLVFLGSLWA) are cleaved as a signal peptide.

The protein belongs to the TolB family. As to quaternary structure, the Tol-Pal system is composed of five core proteins: the inner membrane proteins TolA, TolQ and TolR, the periplasmic protein TolB and the outer membrane protein Pal. They form a network linking the inner and outer membranes and the peptidoglycan layer.

It localises to the periplasm. Functionally, part of the Tol-Pal system, which plays a role in outer membrane invagination during cell division and is important for maintaining outer membrane integrity. The chain is Tol-Pal system protein TolB from Campylobacter jejuni (strain RM1221).